The sequence spans 397 residues: Elongation factor Tu (397 aa).

A tr-type G domain is found at 10 to 206 (KPHVNIGTIG…AVDEYIPTPE (197 aa)). Positions 19–26 (GHIDHGKT) are G1. Residue 19–26 (GHIDHGKT) coordinates GTP. Thr26 provides a ligand contact to Mg(2+). Residues 62 to 66 (GITIS) are G2. Positions 83 to 86 (DCPG) are G3. GTP contacts are provided by residues 83–87 (DCPGH) and 138–141 (NKCD). Residues 138–141 (NKCD) are G4. Residues 176-178 (AAF) are G5.

Belongs to the TRAFAC class translation factor GTPase superfamily. Classic translation factor GTPase family. EF-Tu/EF-1A subfamily. As to quaternary structure, monomer.

Its subcellular location is the cytoplasm. The catalysed reaction is GTP + H2O = GDP + phosphate + H(+). GTP hydrolase that promotes the GTP-dependent binding of aminoacyl-tRNA to the A-site of ribosomes during protein biosynthesis. This Nocardioides sp. (strain ATCC BAA-499 / JS614) protein is Elongation factor Tu.